The sequence spans 215 residues: Ras-related protein Rab-5A (215 aa).

GTP contacts are provided by serine 29, alanine 30, glycine 32, lysine 33, serine 34, serine 35, histidine 46, glutamate 47, threonine 52, and glycine 78. Serine 34 is a Mg(2+) binding site. 2 consecutive short sequence motifs (switch) follow at residues glutamine 44–alanine 56 and alanine 77–alanine 93. Threonine 52 provides a ligand contact to Mg(2+). Serine 84 bears the Phosphoserine mark. Positions 133, 134, 136, 164, and 165 each coordinate GTP. The interval leucine 181 to asparagine 215 is disordered. Over residues glutamate 203–asparagine 215 the composition is skewed to polar residues. Residues cysteine 212 and cysteine 213 are each lipidated (S-geranylgeranyl cysteine).

This sequence belongs to the small GTPase superfamily. Rab family. In terms of assembly, interacts with GDI1; this promotes dissociation from membranes; phosphorylation at Ser-84 disrupts this interaction. Interacts with GDI2; phosphorylation at Ser-84 disrupts the interaction. Binds EEA1. Interacts with ALS2CL, SUN2, ZFYVE20 and RUFY1. Interacts with RIN1 and GAPVD1, which regulate its pathway, probably by acting as a GEF. Interacts with SGSM1 and SGSM3. Interacts with PIK3CB. Interacts with RABEP1 and RINL. Interacts with OCRL and INPP5F. May be a component of a complex composed of RAB5A, DYN2 and PIK3C3. Does not interact with the BLOC-3 complex (heterodimer of HPS1 and HPS4). Interacts with CLN5. Interacts with APPL2. Interacts with F8A1/F8A2/F8A3. Found in a complex with F8A1/F8A2/F8A3, HTT and RAB5A; mediates the recruitment of HTT by RAB5A onto early endosomes. Interacts with ATP9A. Interacts with PPP1R21; mediates the recruitment of FERRY complex by RAB5A onto early endosomes. The cofactor is Mg(2+). In terms of processing, phosphorylation of Ser-84 in the switch II region by LRRK2 prevents the association of RAB regulatory proteins, including RAB GDP dissociation inhibitors GDI1 and GDI2.

It is found in the cell membrane. The protein localises to the early endosome membrane. The protein resides in the melanosome. It localises to the cytoplasmic vesicle. Its subcellular location is the cell projection. It is found in the ruffle. The protein localises to the cytoplasm. The protein resides in the cytosol. It localises to the membrane. Its subcellular location is the phagosome membrane. It is found in the endosome membrane. It carries out the reaction GTP + H2O = GDP + phosphate + H(+). Regulated by guanine nucleotide exchange factors (GEFs) including RINL, which promote the exchange of bound GDP for free GTP. Regulated by GTPase activating proteins (GAPs) which increase the GTP hydrolysis activity. Inhibited by GDP dissociation inhibitors (GDIs). In terms of biological role, the small GTPases Rab are key regulators of intracellular membrane trafficking, from the formation of transport vesicles to their fusion with membranes. Rabs cycle between an inactive GDP-bound form and an active GTP-bound form that is able to recruit to membranes different sets of downstream effectors directly responsible for vesicle formation, movement, tethering and fusion. RAB5A is required for the fusion of plasma membranes and early endosomes. Contributes to the regulation of filopodia extension. Required for the exosomal release of SDCBP, CD63, PDCD6IP and syndecan. Regulates maturation of apoptotic cell-containing phagosomes, probably downstream of DYN2 and PIK3C3. The polypeptide is Ras-related protein Rab-5A (RAB5A) (Canis lupus familiaris (Dog)).